A 490-amino-acid chain; its full sequence is MALQFTLNQDAPASAAVDCIVVGVFADKTLSPAAQALDSASQGRLTALVARGDVASKTGSTTLLHDLPGVTAPRVLVVGLGEAGKFGVAPYLKAVGDATRALKTGAVGTALLTLTELTVKARDAAWNIRQAVTVSDHAAYRYTATLGKKKVDETGLTTLAIAGDDARALAVGVATAEGVEFARELGNLPPNYCTPAYLADTAAAFAGKFRGAEAEILDEAQMEALGMGSLLSVARGSANRPRLIVLKWNGGGDARPYVLVGKGITFDTGGVNLKTQGGIEEMKYDMCGGANVIGTFVATVKAELPINLVVVVPAVENAIDGNAYRPSDVITSMSGKTIEVGNTDAEGRLILCDALTYAERFNPEALVDVATLTGACMVALGHQTAGLMSKHDDLANELLAAGEHVFDRAWRLPLWDEYQGLLDSTFADVYNIGGRWGGAITAGCFLSRFTENQRWAHLDIAGVASDEGKRGMATGRPVGLLTQWLLDRAA.

K262 and D267 together coordinate Mn(2+). K274 is a catalytic residue. The Mn(2+) site is built by D285, D344, and E346. Residue R348 is part of the active site.

This sequence belongs to the peptidase M17 family. Mn(2+) is required as a cofactor.

It is found in the cytoplasm. It catalyses the reaction Release of an N-terminal amino acid, Xaa-|-Yaa-, in which Xaa is preferably Leu, but may be other amino acids including Pro although not Arg or Lys, and Yaa may be Pro. Amino acid amides and methyl esters are also readily hydrolyzed, but rates on arylamides are exceedingly low.. It carries out the reaction Release of an N-terminal amino acid, preferentially leucine, but not glutamic or aspartic acids.. Functionally, presumably involved in the processing and regular turnover of intracellular proteins. Catalyzes the removal of unsubstituted N-terminal amino acids from various peptides. The protein is Probable cytosol aminopeptidase of Xanthomonas axonopodis pv. citri (strain 306).